The primary structure comprises 268 residues: Centromere protein Q (268 aa).

Positions M1–T80 are disordered. S31 and S50 each carry phosphoserine. The segment covering T58 to T72 has biased composition (basic residues). Residues E170–S206 adopt a coiled-coil conformation. Residue S249 is modified to Phosphoserine.

It belongs to the CENP-Q/OKP1 family. Component of the CENPA-CAD complex, composed of CENPI, CENPK, CENPL, CENPO, CENPP, CENPQ, CENPR and CENPS. The CENPA-CAD complex interacts with the CENPA-NAC complex, at least composed of CENPA, CENPC, CENPH, CENPM, CENPN, CENPT and CENPU. Phosphorylation at Ser-50 is essential for CENPE recruitment to kinetochores and orderly chromosome congression.

The protein resides in the nucleus. Its subcellular location is the chromosome. The protein localises to the centromere. Its function is as follows. Component of the CENPA-CAD (nucleosome distal) complex, a complex recruited to centromeres which is involved in assembly of kinetochore proteins, mitotic progression and chromosome segregation. May be involved in incorporation of newly synthesized CENPA into centromeres via its interaction with the CENPA-NAC complex. Plays an important role in chromosome congression and in the recruitment of CENP-O complex (which comprises CENPO, CENPP, CENPQ and CENPU), CENPE and PLK1 to the kinetochores. This Homo sapiens (Human) protein is Centromere protein Q (CENPQ).